A 342-amino-acid chain; its full sequence is Phosphate acyltransferase (342 aa).

It belongs to the PlsX family. Homodimer. Probably interacts with PlsY.

It is found in the cytoplasm. The catalysed reaction is a fatty acyl-[ACP] + phosphate = an acyl phosphate + holo-[ACP]. The protein operates within lipid metabolism; phospholipid metabolism. Its function is as follows. Catalyzes the reversible formation of acyl-phosphate (acyl-PO(4)) from acyl-[acyl-carrier-protein] (acyl-ACP). This enzyme utilizes acyl-ACP as fatty acyl donor, but not acyl-CoA. The polypeptide is Phosphate acyltransferase (Shewanella pealeana (strain ATCC 700345 / ANG-SQ1)).